A 745-amino-acid chain; its full sequence is Probable GMP synthase [glutamine-hydrolyzing] (745 aa).

Positions 1-37 (MKRSSSMLDINEDSQHSTNKAPPPKKAPEDRFDSANM) are disordered. Positions 60 to 252 (RIAILDFGAQ…LFKVVGCCGN (193 aa)) constitute a Glutamine amidotransferase type-1 domain. The active-site For GATase activity is Cys138. Catalysis depends on residues His226 and Glu228. Residues 253–461 (FTIQNREQSC…LGLPESIVQR (209 aa)) enclose the GMPS ATP-PPase domain. 280 to 286 (SGGVDSA) lines the ATP pocket. Arg363, Asp563, Gln662, Lys737, and Glu743 together coordinate substrate.

In terms of assembly, homodimer.

It catalyses the reaction XMP + L-glutamine + ATP + H2O = GMP + L-glutamate + AMP + diphosphate + 2 H(+). Its pathway is purine metabolism; GMP biosynthesis; GMP from XMP (L-Gln route): step 1/1. The polypeptide is Probable GMP synthase [glutamine-hydrolyzing] (gmps-1) (Caenorhabditis elegans).